Consider the following 648-residue polypeptide: Cysteine-rich receptor-like protein kinase 38 (648 aa).

An N-terminal signal peptide occupies residues 1–25; it reads MKNSAAIFLTSSLILLLQTLHGVKA. 2 consecutive Gnk2-homologous domains span residues 26–127 and 140–247; these read GFIC…DQST and PSPV…FYPF. At 26–278 the chain is on the extracellular side; that stretch reads GFICVGSSFP…EAISITRLKG (253 aa). 5 N-linked (GlcNAc...) asparagine glycosylation sites follow: Asn37, Asn63, Asn151, Asn174, and Asn253. Residues 279–299 traverse the membrane as a helical segment; sequence GIIAIFVVPIVINLLVFIGLI. At 300 to 648 the chain is on the cytoplasmic side; sequence RAYTRIRKSY…ELSITELSPR (349 aa). A Protein kinase domain is found at 339–611; sequence FSFENKIGQG…VIQWLGSETI (273 aa). Residues 345-353 and Lys367 contribute to the ATP site; that span reads IGQGGFGSV. A Phosphotyrosine modification is found at Tyr412. Catalysis depends on Asp464, which acts as the Proton acceptor. Residue Ser468 is modified to Phosphoserine. Phosphothreonine is present on Thr504. At Tyr512 the chain carries Phosphotyrosine.

It belongs to the protein kinase superfamily. Ser/Thr protein kinase family. CRK subfamily.

It localises to the membrane. The catalysed reaction is L-seryl-[protein] + ATP = O-phospho-L-seryl-[protein] + ADP + H(+). It carries out the reaction L-threonyl-[protein] + ATP = O-phospho-L-threonyl-[protein] + ADP + H(+). The protein is Cysteine-rich receptor-like protein kinase 38 (CRK38) of Arabidopsis thaliana (Mouse-ear cress).